The chain runs to 103 residues: NAIPGQHYRWPGAKVPYVIDSSLQSNTGFIQRAFQNYALGFYHEQNRSDRDDYLIIYVDNVQKGMEFNFAKLAPSQNILYTTFDYGSIMIYGNDAFSRDGSPM.

The 103-residue stretch at 1-103 (NAIPGQHYRW…DAFSRDGSPM (103 aa)) folds into the Peptidase M12A domain.

Requires Zn(2+) as cofactor.

In terms of biological role, active against casein. Has a role as a digestive enzyme. The polypeptide is Astacin-like peptidase p16 (Argiope aurantia (Black-and-yellow garden spider)).